Consider the following 126-residue polypeptide: C-type natriuretic peptide (126 aa).

The signal sequence occupies residues 1–23 (MHLSQLLACALLLALLSLRPSEA). The segment at 20–71 (PSEAKPGAPPKVPRTPSGEEVAEPQAAGGGQKKGDKTPGGGGANLKDDRSRL) is disordered. Residues 24–73 (KPGAPPKVPRTPSGEEVAEPQAAGGGQKKGDKTPGGGGANLKDDRSRLLR) constitute a propeptide that is removed on maturation. The span at 46 to 62 (AGGGQKKGDKTPGGGGA) shows a compositional bias: gly residues. Cys-110 and Cys-126 are joined by a disulfide.

This sequence belongs to the natriuretic peptide family. In terms of processing, degraded by IDE (in vitro).

The protein resides in the secreted. Hormone which plays a role in endochondral ossification through regulation of cartilaginous growth plate chondrocytes proliferation and differentiation. May also be vasoactive and natriuretic. Acts by specifically binding and stimulating NPR2 to produce cGMP. Binds the clearance receptor NPR3. In Bos taurus (Bovine), this protein is C-type natriuretic peptide (NPPC).